A 382-amino-acid chain; its full sequence is MSQSNNVTDLARANIRALTPYMSARRLGGNGDVWLNANEYPLGTEYQLTTQTFNRYPECQPKHVIERYAAYAGLPPEQVLVSRGADEGIELLIRAFCEPGQDAILFCPPTYGMYAVSAETFGVERRTVPAQADWQLDLPAIANNLEQVKVIYVCSPNNPTGNLINPADLQAVLALAQGRAIVAIDEAYIEFCPQASVSNWLKDYPNLVILRTLSKAFALAGLRCGFTLANSDIIQLLLKVIAPYPLSTPVADIAAQALSPKGIEQMRQRVSEVRANRAWLQSALQDCACVEQVFTSESNYLLVRFTASSSVFKVLWDQGIILRDQNKQPGLANCLRITIGTRQECERVIAALAPLAGIDNSNNIDNQSKTHSQTSSIRKGTI.

At K215 the chain carries N6-(pyridoxal phosphate)lysine. Residues 363-382 form a disordered region; that stretch reads NIDNQSKTHSQTSSIRKGTI.

The protein belongs to the class-II pyridoxal-phosphate-dependent aminotransferase family. Histidinol-phosphate aminotransferase subfamily. As to quaternary structure, homodimer. Pyridoxal 5'-phosphate serves as cofactor.

It carries out the reaction L-histidinol phosphate + 2-oxoglutarate = 3-(imidazol-4-yl)-2-oxopropyl phosphate + L-glutamate. It participates in amino-acid biosynthesis; L-histidine biosynthesis; L-histidine from 5-phospho-alpha-D-ribose 1-diphosphate: step 7/9. The sequence is that of Histidinol-phosphate aminotransferase from Yersinia pseudotuberculosis serotype O:3 (strain YPIII).